The sequence spans 211 residues: Large ribosomal subunit protein uL3 (211 aa).

N5-methylglutamine is present on Q150.

This sequence belongs to the universal ribosomal protein uL3 family. In terms of assembly, part of the 50S ribosomal subunit. Forms a cluster with proteins L14 and L19. Post-translationally, methylated by PrmB.

Functionally, one of the primary rRNA binding proteins, it binds directly near the 3'-end of the 23S rRNA, where it nucleates assembly of the 50S subunit. In Pseudomonas syringae pv. tomato (strain ATCC BAA-871 / DC3000), this protein is Large ribosomal subunit protein uL3.